We begin with the raw amino-acid sequence, 308 residues long: 1D-myo-inositol 2-acetamido-2-deoxy-alpha-D-glucopyranoside deacetylase (308 aa).

Residues His18, Asp21, and His153 each coordinate Zn(2+).

Belongs to the MshB deacetylase family. Zn(2+) serves as cofactor.

It catalyses the reaction 1D-myo-inositol 2-acetamido-2-deoxy-alpha-D-glucopyranoside + H2O = 1D-myo-inositol 2-amino-2-deoxy-alpha-D-glucopyranoside + acetate. Its function is as follows. Catalyzes the deacetylation of 1D-myo-inositol 2-acetamido-2-deoxy-alpha-D-glucopyranoside (GlcNAc-Ins) in the mycothiol biosynthesis pathway. The protein is 1D-myo-inositol 2-acetamido-2-deoxy-alpha-D-glucopyranoside deacetylase of Salinispora arenicola (strain CNS-205).